The chain runs to 146 residues: Hemoglobin subunit beta-2 (146 aa).

Residues 2–146 enclose the Globin domain; it reads HWTAEEKQLI…VAHALARRYH (145 aa). Histidine 63 and histidine 92 together coordinate heme b.

This sequence belongs to the globin family. Heterotetramer of two alpha chains and two beta chains. As to expression, red blood cells.

Functionally, involved in oxygen transport from the lung to the various peripheral tissues. The chain is Hemoglobin subunit beta-2 from Iguana iguana (Common iguana).